The primary structure comprises 320 residues: Pyrroline-5-carboxylate reductase 2 (320 aa).

Ser-2 carries the N-acetylserine modification. NADP(+) is bound by residues 6–11 (IGAGQL) and Ser-34. Residues Ala-8, Gln-10, Leu-11, Ser-34, Glu-36, Asn-56, Val-70, Lys-71, and Ala-97 each coordinate NADPH. Residues Asn-56, 69-72 (AVKP), and 95-97 (CAA) each bind NADP(+). Residue Glu-164 coordinates L-proline. Residue Asn-230 coordinates NADPH. Positions 237 and 238 each coordinate L-proline. Low complexity predominate over residues 295-305 (PTVSTLTPSSP). Residues 295–320 (PTVSTLTPSSPGKLLTRSLALGGKKD) are disordered. The residue at position 304 (Ser-304) is a Phosphoserine.

It belongs to the pyrroline-5-carboxylate reductase family. Homodecamer; composed of 5 homodimers. Interacts with LTO1.

The protein localises to the cytoplasm. It is found in the mitochondrion. It catalyses the reaction L-proline + NADP(+) = (S)-1-pyrroline-5-carboxylate + NADPH + 2 H(+). The enzyme catalyses L-proline + NAD(+) = (S)-1-pyrroline-5-carboxylate + NADH + 2 H(+). Its pathway is amino-acid biosynthesis; L-proline biosynthesis; L-proline from L-glutamate 5-semialdehyde: step 1/1. Functionally, oxidoreductase that catalyzes the last step in proline biosynthesis, which corresponds to the reduction of pyrroline-5-carboxylate to L-proline using NAD(P)H. At physiologic concentrations, has higher specific activity in the presence of NADH. Involved in cellular response to oxidative stress. In some cell types, such as erythrocytes, its primary function may be the generation of NADP(+). The sequence is that of Pyrroline-5-carboxylate reductase 2 (PYCR2) from Macaca fascicularis (Crab-eating macaque).